Here is a 522-residue protein sequence, read N- to C-terminus: Acetylcholine receptor subunit delta (522 aa).

The N-terminal stretch at 1–21 (MGNIHFVYLLISCLYYSGCSG) is a signal peptide. Topologically, residues 22 to 245 (VNEEERLIND…VTFYLIIRRK (224 aa)) are extracellular. N-linked (GlcNAc...) asparagine glycosylation is found at Asn91, Asn164, and Asn229. An intrachain disulfide couples Cys151 to Cys165. The next 3 membrane-spanning stretches (helical) occupy residues 246–270 (PLFY…AFYL), 278–295 (MSTA…LLLT), and 312–333 (YLMF…VLNF). At 334-476 (HFRTPSTHVL…WNLVGQTIDR (143 aa)) the chain is on the cytoplasmic side. Phosphotyrosine; by Tyr-kinases is present on Tyr393. The chain crosses the membrane as a helical span at residues 477-497 (LSMFIITPVMVLGTIFIFVMG).

It belongs to the ligand-gated ion channel (TC 1.A.9) family. Acetylcholine receptor (TC 1.A.9.1) subfamily. Pentamer of two alpha chains, and one each of the beta, delta, and gamma chains.

The protein localises to the postsynaptic cell membrane. It is found in the cell membrane. It carries out the reaction K(+)(in) = K(+)(out). The catalysed reaction is Na(+)(in) = Na(+)(out). In terms of biological role, after binding acetylcholine, the AChR responds by an extensive change in conformation that affects all subunits and leads to opening of an ion-conducting channel across the plasma membrane. The protein is Acetylcholine receptor subunit delta (chrnd) of Tetronarce californica (Pacific electric ray).